The sequence spans 93 residues: MASEMIVDHRQKAFELLKVDAEKILKLIRVQMDNLTMPQCPLYEEVLDTQMFGLSREIDFAVRLGLVDEKDGKDLLYTLERELSALHDAFTAK.

It belongs to the UPF0358 family.

Its function is as follows. Essential for cell growth and for normal cell shape. This is UPF0358 protein YlaN (ylaN) from Bacillus subtilis (strain 168).